We begin with the raw amino-acid sequence, 244 residues long: UPF0173 metal-dependent hydrolase RoseRS_3945 (244 aa).

Belongs to the UPF0173 family.

This Roseiflexus sp. (strain RS-1) protein is UPF0173 metal-dependent hydrolase RoseRS_3945.